The chain runs to 78 residues: MPKIYRIVGETTTGMKFKIEVTAEKPYDAIEKVYSLIGSRHKLSRVQIKIREVTAVQPEEARSDSVKMLMAIDRVIKY.

The protein belongs to the eukaryotic ribosomal protein eL20 family. In terms of assembly, part of the 50S ribosomal subunit. Binds 23S rRNA.

The polypeptide is Large ribosomal subunit protein eL20 (Pyrobaculum islandicum (strain DSM 4184 / JCM 9189 / GEO3)).